The following is a 140-amino-acid chain: MPDPNRVLAGKKATLHNPNVSQQAKERAEDYIESHSSGQETGDYSAQAGGRDLDYEDLGDYDEDADFDNEEGLNVLGDESGFVDDPMKTGDLVEEDQLEGKNIENVRGGYKATMHNPNVSKQAKTRAQRALEEIDDETQA.

2 disordered regions span residues methionine 1 to lysine 88 and tyrosine 110 to alanine 140. Residues alanine 24–glutamate 33 are compositionally biased toward basic and acidic residues. Residues serine 34–tyrosine 44 are compositionally biased toward polar residues. The segment covering aspartate 54–glutamate 71 has biased composition (acidic residues).

The protein belongs to the UPF0654 (con-6) family.

In Schizosaccharomyces pombe (strain 972 / ATCC 24843) (Fission yeast), this protein is UPF0654 protein C22G7.11c.